The primary structure comprises 504 residues: Kinesin light chain 3 (504 aa).

Positions 90–150 (ALSAHVGALE…EEEKRHLEFL (61 aa)) form a coiled coil. Residues 153–197 (LRQYDPPAESQQSESPPRRDSLASLFPSEEEERKGPEAAGAAAAQ) form a disordered region. The span at 158 to 167 (PPAESQQSES) shows a compositional bias: low complexity. The residue at position 173 (S173) is a Phosphoserine. 5 TPR repeats span residues 207-240 (LRTLHNLVIQYAGQGRYEVAVPLCRQALEDLERS), 249-282 (ATMLNILALVYRDQNKYKEATDLLHDALQIREQT), 291-324 (AATLNNLAVLYGKRGRYREAEPLCQRALEIREKV), 333-366 (AKQLNNLALLCQNQGKFEDVERHYARALSIYEAL), and 375-408 (AKTKNNLASAYLKQNKYQQAEELYKEILHKEDLP). A disordered region spans residues 411–438 (LGAPNTGTAGDAEQALRRSSSLSKIRES). Phosphoserine is present on S466. The tract at residues 472-504 (VDAPRAPGTQFPSWHLDKAPRTLSASTQDLSPH) is disordered. Residues 494 to 504 (LSASTQDLSPH) show a composition bias toward polar residues. Residue T498 is modified to Phosphothreonine. S502 carries the post-translational modification Phosphoserine.

Belongs to the kinesin light chain family. Oligomer composed of two heavy chains and two light chains. Associates with microtubulin in an ATP-dependent manner. Interacts with KIF5C. Interacts with ODF1. Interacts with LRGUK. Interacts with VDAC2.

It is found in the cytoplasm. It localises to the cytoskeleton. The protein resides in the mitochondrion. Functionally, kinesin is a microtubule-associated force-producing protein that may play a role in organelle transport. Plays a role during spermiogenesis in the development of the sperm tail midpiece and in the normal function of spermatozoa. May play a role in the formation of the mitochondrial sheath formation in the developing spermatid midpiece. This chain is Kinesin light chain 3 (KLC3), found in Homo sapiens (Human).